Reading from the N-terminus, the 367-residue chain is dTDP-4-amino-4,6-dideoxy-D-glucose transaminase (367 aa).

Position 184 is an N6-(pyridoxal phosphate)lysine (lysine 184).

This sequence belongs to the DegT/DnrJ/EryC1 family. Pyridoxal 5'-phosphate serves as cofactor.

The catalysed reaction is dTDP-4-amino-4,6-dideoxy-D-glucose + 2-oxoglutarate = dTDP-4-dehydro-6-deoxy-alpha-D-glucose + L-glutamate. The protein operates within bacterial outer membrane biogenesis; lipopolysaccharide biosynthesis. Catalyzes the conversion of dTDP-4-dehydro-6-deoxy-D-glucose (dTDP-D-Glc4O) to dTDP-4-amino-4,6-dideoxy-D-glucose (dTDP-D-Qui4N). L-glutamine can also be used as amino donor. The protein is dTDP-4-amino-4,6-dideoxy-D-glucose transaminase (vioA) of Shigella dysenteriae.